The primary structure comprises 321 residues: UDP-N-acetyl-alpha-D-glucosaminuronate decarboxylase (321 aa).

12 residues coordinate NAD(+): glycine 12, phenylalanine 13, isoleucine 14, aspartate 33, asparagine 34, tyrosine 36, glycine 38, leucine 76, threonine 95, alanine 117, tyrosine 148, and lysine 152. The active-site Proton acceptor is the tyrosine 148.

Belongs to the NAD(P)-dependent epimerase/dehydratase family. Homodimer. The cofactor is NAD(+).

The catalysed reaction is UDP-2-acetamido-2-deoxy-alpha-D-glucuronate + H(+) = UDP-N-acetyl-alpha-D-xylosamine + CO2. Its activity is regulated as follows. Activity is completely inhibited by NADH but not by NADPH. Its function is as follows. Decarboxylase involved in the biosynthesis of the nucleotide-sugar UDP-N-acetylxylosamine (UDP-XylNAc). Catalyzes the NAD-dependent decarboxylation of UDP-N-acetylglucosaminuronic acid (UDP-GlcNAcA) to UDP-XylNAc. Cannot use other UDP-uronates, such as UDP-glucuronic acid (UDP-GlcA) and UDP-galacturonic acid (UDP-GalA). This chain is UDP-N-acetyl-alpha-D-glucosaminuronate decarboxylase, found in Bacillus cytotoxicus (strain DSM 22905 / CIP 110041 / 391-98 / NVH 391-98).